Reading from the N-terminus, the 684-residue chain is Threonine--tRNA ligase (684 aa).

In terms of domain architecture, TGS spans 1–66 (MSTAASPAPA…DADVEVVPVP (66 aa)). A catalytic region spans residues 261–567 (DHRKLGVELD…LTEHYAGAFP (307 aa)). Positions 366, 417, and 544 each coordinate Zn(2+).

It belongs to the class-II aminoacyl-tRNA synthetase family. Homodimer. Zn(2+) is required as a cofactor.

It is found in the cytoplasm. It catalyses the reaction tRNA(Thr) + L-threonine + ATP = L-threonyl-tRNA(Thr) + AMP + diphosphate + H(+). In terms of biological role, catalyzes the attachment of threonine to tRNA(Thr) in a two-step reaction: L-threonine is first activated by ATP to form Thr-AMP and then transferred to the acceptor end of tRNA(Thr). Also edits incorrectly charged L-seryl-tRNA(Thr). The chain is Threonine--tRNA ligase from Mycobacterium sp. (strain KMS).